A 276-amino-acid chain; its full sequence is Protein SCO1 homolog 2, mitochondrial (276 aa).

The N-terminal 14 residues, 1-14 (MLPCRRLVLSCKNQ), are a transit peptide targeting the mitochondrion. The chain crosses the membrane as a helical span at residues 66-82 (YAVPAILLGFAGFVGFL). The Thioredoxin domain occupies 110-273 (VKGPIIGGPF…SQELLKEVAS (164 aa)).

This sequence belongs to the SCO1/2 family. As to expression, expressed in the whole plant with highest expression in imbibed seeds and embryos, and the root hair zone.

It localises to the mitochondrion inner membrane. Thought to play a role in cellular copper homeostasis, mitochondrial redox signaling or insertion of copper into the active site of COX. Participates in copper and redox homeostasis. This Arabidopsis thaliana (Mouse-ear cress) protein is Protein SCO1 homolog 2, mitochondrial (HCC2).